The chain runs to 131 residues: Glycine cleavage system H protein (131 aa).

The 83-residue stretch at 24 to 106 (IATLGISAFA…HGEGWLLKVR (83 aa)) folds into the Lipoyl-binding domain. Lys-65 is subject to N6-lipoyllysine.

It belongs to the GcvH family. In terms of assembly, the glycine cleavage system is composed of four proteins: P, T, L and H. It depends on (R)-lipoate as a cofactor.

Functionally, the glycine cleavage system catalyzes the degradation of glycine. The H protein shuttles the methylamine group of glycine from the P protein to the T protein. The sequence is that of Glycine cleavage system H protein from Microcystis aeruginosa (strain NIES-843 / IAM M-2473).